A 153-amino-acid chain; its full sequence is MAVPMDTISGPWGNNGGNFWSFRPVNKINQIVISYGGGGNNPIALTFSSTKADGSKDTITVGGGGPDSITGTEMVNIGTDEYLTGISGTFGIYLDNNVLRSITFTTNLKAHGPYGQKVGTPFSSANVVGNEIVGFLGRSGYYVDAIGTYNRHK.

Alanine 2 carries the N-acetylalanine modification. A Jacalin-type lectin domain is found at 6–152 (DTISGPWGNN…VDAIGTYNRH (147 aa)). 3 N-glycan binding regions span residues 17–18 (GN), 95–96 (DN), and 140–144 (GYYVD).

It belongs to the jacalin lectin family. As to quaternary structure, homodimer. Post-translationally, not glycosylated. As to expression, rhizome (at protein level). Detected in the cortex and the pith of rhizome. Not detected in vascular tissues, pericycle, endodermis or rhizodermis.

It localises to the cytoplasm. Its activity is regulated as follows. Hemagglutinating activity is most inhibited by methyl alpha-mannopyranoside. This activity is inhibited to a less extent (about a third of the inhibition of that of methyl alpha-mannopyranoside) by methyl alpha-glucoside, other alpha-glucosides, such as maltose, isomaltose, panose or palatinose, and alpha-glucosides modified at the second position, such as methyl 2-deoxy-alpha-arabinoglucopyranoside or methyl 2-acetamido-2-deoxy alpha-glucopyranoside. Mildly inhibited by free monosaccharides, with glucose presenting at least 20-fold less inhibitory effect on hemagglutinating activity than mannose. Glycoproteins are somewhat inhibitory, the best being asialothyroglobulin and ovomucoid. Not inhibited by isomaltitol, sucrose or trehalose. In terms of biological role, mannose-binding lectin. Preferentially binds mannose at concentrations ranging between 5 and 25 mM, but also binds glucose. Has a marked preference for methylated sugar derivatives, such as alpha-MeMan and alpha-MeGlc, at concentration down to 5 mM. Binds to N-glycans, but not to glycolipid-type or other type of glycans. Binds N-linked high-mannose-type glycans. Has a preference for smaller (Man(2)-Man(6)) high-mannose-type glycans to larger (Man(7)-Man(9)) ones. Recognizes both alpha1-6 extended and alpha1-3 extended monoantennary glycans. The addition of alpha1-2Man to the Man-alpha1-3Man-beta branch results in a significant loss of affinity, but beta1-2GlcNAc has some affinity. Has less affinity for biantennary glycans. However, affinity is significant for the biantennary complex-type N-glycans with bisecting GlcNAc. No affinity is observed for tri- and tetra-antennary glycans. Binds bisected glycans of the mouse brain. Selectively binds to bisecting N-glycans which are in back-fold conformation, and does not favor a glycan with an extend conformation. Has hemagglutinating activity against rabbit erythrocytes at 0.3 ug/ml and against trypsin-treated human erythrocytes at 5 ug/ml. Has mitogenic activity in murine cells. The protein is Jacalin-related lectin Calsepa of Calystegia sepium (Hedge bindweed).